The primary structure comprises 78 residues: Small ribosomal subunit protein bS18 (78 aa).

It belongs to the bacterial ribosomal protein bS18 family. As to quaternary structure, part of the 30S ribosomal subunit. Forms a tight heterodimer with protein bS6.

Functionally, binds as a heterodimer with protein bS6 to the central domain of the 16S rRNA, where it helps stabilize the platform of the 30S subunit. The protein is Small ribosomal subunit protein bS18 of Lacticaseibacillus casei (strain BL23) (Lactobacillus casei).